The following is a 611-amino-acid chain: Phosphatidylinositol 3,4,5-trisphosphate 3-phosphatase and protein-tyrosine-phosphatase PTEN2A (611 aa).

2 disordered regions span residues 1–42 (MSSE…GVAS) and 87–109 (GIRLSPKSPQTNDTTTEGTSSAT). Serine 91 is modified (phosphoserine). The segment covering 100–109 (TTTEGTSSAT) has biased composition (low complexity). The Phosphatase tensin-type domain occupies 145-324 (RRYQEGGFDL…KYFERILTYF (180 aa)). Cysteine 263 (phosphocysteine intermediate) is an active-site residue. Positions 331-458 (GRRCMLRGFR…FMVEVVLADI (128 aa)) constitute a C2 tensin-type domain. The span at 462-486 (IPTNPSSETASKTPEETSAANSSPV) shows a compositional bias: polar residues. The tract at residues 462–589 (IPTNPSSETA…VNASSSSESE (128 aa)) is disordered. The segment covering 495–507 (PDKETENPDKDDV) has biased composition (basic and acidic residues). The residue at position 509 (serine 509) is a Phosphoserine. 2 stretches are compositionally biased toward polar residues: residues 514-530 (DSTGPTKTTSSASSQTP) and 549-565 (VSISGNKGSSQPVQGVT).

It belongs to the PTEN phosphatase protein family. Expressed in seedlings, roots, stems, leaves, flowers and siliques. However, at protein level, not observed in older leaves and mature siliques.

The catalysed reaction is O-phospho-L-tyrosyl-[protein] + H2O = L-tyrosyl-[protein] + phosphate. It catalyses the reaction a 1,2-diacyl-sn-glycero-3-phospho-(1D-myo-inositol-3,4,5-trisphosphate) + H2O = a 1,2-diacyl-sn-glycero-3-phospho-(1D-myo-inositol-4,5-bisphosphate) + phosphate. In terms of biological role, binds phosphatidic acid. Protein tyrosine phosphatase that also exhibits lipid phosphatase activity. Hydrolyzed poorly p-nitrophenyl phosphate (p-NPP). Can use PtdIns isomers as substrates. Removes efficiently phosphate from the D3 position of the inositol ring, less from the D4 position and not at all from the D5 position on monophosphorylated PtdIns isomers (PIPs). The presence of a phosphate group in the D5 position on PIP(2) isomers reduces lipid phosphatase activity. Mostly active on PtdIns(3)P and PtdIns(3,4)P(2), to a lower extent, on PtdIns(4)P and PtdIns(3,5)P(2), but barely against PtdIns(3,4,5)P(3) as substrate. The polypeptide is Phosphatidylinositol 3,4,5-trisphosphate 3-phosphatase and protein-tyrosine-phosphatase PTEN2A (Arabidopsis thaliana (Mouse-ear cress)).